The primary structure comprises 254 residues: D-aminoacyl-tRNA deacylase (254 aa).

The segment at 61 to 83 is disordered; the sequence is KPTLTVHTPGNLTEDNSHGGNPE. Positions 65–74 are enriched in polar residues; that stretch reads TVHTPGNLTE.

It belongs to the DtdA deacylase family. In terms of assembly, monomer. Zn(2+) is required as a cofactor.

It catalyses the reaction a D-aminoacyl-tRNA + H2O = a tRNA + a D-alpha-amino acid + H(+). It carries out the reaction glycyl-tRNA(Ala) + H2O = tRNA(Ala) + glycine + H(+). D-aminoacyl-tRNA deacylase with broad substrate specificity. By recycling D-aminoacyl-tRNA to D-amino acids and free tRNA molecules, this enzyme counteracts the toxicity associated with the formation of D-aminoacyl-tRNA entities in vivo. This chain is D-aminoacyl-tRNA deacylase, found in Methanococcus maripaludis (strain C7 / ATCC BAA-1331).